A 481-amino-acid chain; its full sequence is Small ribosomal subunit protein bS1 (481 aa).

S1 motif domains lie at 36-105, 123-188, 209-277, and 294-363; these read GDIV…LSKK, DEAV…LSRR, GAIR…LSLK, and GQIV…LSLK. A disordered region spans residues 437 to 465; sequence ATEEAGHGSSEQPPASSTPSAKATGGSLA. Positions 445-457 are enriched in polar residues; it reads SSEQPPASSTPSA.

It belongs to the bacterial ribosomal protein bS1 family.

In terms of biological role, binds mRNA; thus facilitating recognition of the initiation point. It is needed to translate mRNA with a short Shine-Dalgarno (SD) purine-rich sequence. This Mycobacterium leprae (strain TN) protein is Small ribosomal subunit protein bS1 (rpsA).